We begin with the raw amino-acid sequence, 334 residues long: MENFGEGRRSGGGMLPLLALSAVAEYYRLPWKPPVTASLLAANTLVYLRPAFIDPVIPHISEVWFNPHLIFKHKDLKRLFLSAFYHVNEPHLVYNMMSLLWKGIKLETSMGSSEFASMVFTLIGMSQGVTLLLAKSLLLLFDYDRAYYNEYAVGFSGVLFAMKVVLNSQAEDYSSVYGILVPTKYAAWAELILVQMFVPNASFLGHLGGILAGIIYLKLKGSYSGSDPVTMAVRGVSRLVTWPLRFLNGMVRSRRRRITGRGRVGRGQTGIAGPGIWRCQSCTYDNSGWLSACEMCGSGRARGNGWSLNQGPALSSSNDLPLDELRRRRVERFS.

Residues 1–87 constitute a mitochondrion transit peptide; sequence MENFGEGRRS…RLFLSAFYHV (87 aa). 4 helical membrane passes run 114 to 134, 146 to 166, 176 to 196, and 197 to 217; these read EFAS…LLLA, AYYN…KVVL, VYGI…LVQM, and FVPN…IIYL. Serine 156 acts as the Nucleophile in catalysis. Residue histidine 206 is the Charge relay system of the active site. The RanBP2-type zinc finger occupies 273–302; the sequence is GPGIWRCQSCTYDNSGWLSACEMCGSGRAR.

This sequence belongs to the peptidase S54 family.

It is found in the mitochondrion membrane. Functionally, probable rhomboid-type serine protease that catalyzes intramembrane proteolysis. May function in the heat-shock response pathway. In Arabidopsis thaliana (Mouse-ear cress), this protein is Rhomboid-like protein 14, mitochondrial.